A 313-amino-acid polypeptide reads, in one-letter code: 2,3-dihydroxyphenylpropionate/2,3-dihydroxicinnamic acid 1,2-dioxygenase (313 aa).

Catalysis depends on histidine 116, which acts as the Proton donor. Histidine 180 acts as the Proton acceptor in catalysis.

This sequence belongs to the LigB/MhpB extradiol dioxygenase family. As to quaternary structure, homotetramer. It depends on Fe(2+) as a cofactor.

It catalyses the reaction 3-(2,3-dihydroxyphenyl)propanoate + O2 = (2Z,4E)-2-hydroxy-6-oxonona-2,4-dienedioate + H(+). The catalysed reaction is (2E)-3-(2,3-dihydroxyphenyl)prop-2-enoate + O2 = (2Z,4E,7E)-2-hydroxy-6-oxonona-2,4,7-trienedioate + H(+). The protein operates within aromatic compound metabolism; 3-phenylpropanoate degradation. In terms of biological role, catalyzes the non-heme iron(II)-dependent oxidative cleavage of 2,3-dihydroxyphenylpropionic acid and 2,3-dihydroxicinnamic acid into 2-hydroxy-6-ketononadienedioate and 2-hydroxy-6-ketononatrienedioate, respectively. The polypeptide is 2,3-dihydroxyphenylpropionate/2,3-dihydroxicinnamic acid 1,2-dioxygenase (Mycobacterium sp. (strain MCS)).